A 260-amino-acid chain; its full sequence is Phosphatidate cytidylyltransferase (260 aa).

The next 7 membrane-spanning stretches (helical) occupy residues 9–29 (IIALIVFLPILLKGGLVLMIF), 46–66 (MIKFVSVPGLISAVGLIIIML), 70–90 (AGPWVQVIQLKSLIAMSFIVL), 102–122 (FMDAAFCLMSVAYVGIGFMFF), 130–150 (LHYILYAFLIVWLTDTGAYLF), 172–192 (FIGGLFCSLIVPLAMLYFVDF), and 196–216 (VWILLGVTLILSLFGQLGDLV).

This sequence belongs to the CDS family.

It is found in the cell membrane. It carries out the reaction a 1,2-diacyl-sn-glycero-3-phosphate + CTP + H(+) = a CDP-1,2-diacyl-sn-glycerol + diphosphate. It participates in phospholipid metabolism; CDP-diacylglycerol biosynthesis; CDP-diacylglycerol from sn-glycerol 3-phosphate: step 3/3. This Staphylococcus aureus (strain COL) protein is Phosphatidate cytidylyltransferase (cdsA).